We begin with the raw amino-acid sequence, 371 residues long: Carnitine monooxygenase oxygenase subunit (371 aa).

The region spanning 44–152 (WICVAHGSEL…VEEYAGFVFI (109 aa)) is the Rieske domain. Positions 86, 88, 106, and 109 each coordinate [2Fe-2S] cluster. Fe cation-binding residues include His-208, His-213, and Asp-323.

This sequence belongs to the bacterial ring-hydroxylating dioxygenase alpha subunit family. CntA subfamily. As to quaternary structure, composed of an oxygenase subunit and a reductase subunit. The cofactor is [2Fe-2S] cluster. Fe cation is required as a cofactor.

The enzyme catalyses (R)-carnitine + NADH + O2 + H(+) = (3R)-3-hydroxy-4-oxobutanoate + trimethylamine + NAD(+) + H2O. The catalysed reaction is (R)-carnitine + NADPH + O2 + H(+) = (3R)-3-hydroxy-4-oxobutanoate + trimethylamine + NADP(+) + H2O. The protein operates within amine and polyamine metabolism; carnitine metabolism. Inhibited by EDTA. Its function is as follows. Converts carnitine to trimethylamine and malic semialdehyde. Acts on both enantiomers. This is Carnitine monooxygenase oxygenase subunit from Acinetobacter pittii (strain PHEA-2).